Here is a 495-residue protein sequence, read N- to C-terminus: Cytochrome P450 2B15 (495 aa).

Ser-129 carries the phosphoserine; by PKA modification. Cys-437 lines the heme pocket.

The protein belongs to the cytochrome P450 family. The cofactor is heme.

It localises to the endoplasmic reticulum membrane. It is found in the microsome membrane. The catalysed reaction is an organic molecule + reduced [NADPH--hemoprotein reductase] + O2 = an alcohol + oxidized [NADPH--hemoprotein reductase] + H2O + H(+). Functionally, cytochromes P450 are a group of heme-thiolate monooxygenases. In liver microsomes, this enzyme is involved in an NADPH-dependent electron transport pathway. It oxidizes a variety of structurally unrelated compounds, including steroids, fatty acids, and xenobiotics. The polypeptide is Cytochrome P450 2B15 (Cyp2b15) (Rattus norvegicus (Rat)).